The chain runs to 109 residues: Hainantoxin-XVIII-7 (109 aa).

The signal sequence occupies residues 1–18 (MKLSIIIIATSLVIAVVA). The propeptide occupies 19–46 (FPSKDSKAIENDKTEQRMEIVVQETARA). Intrachain disulfides connect C47/C62, C55/C68, C59/C108, and C61/C81.

It belongs to the neurotoxin 25 family. F7 subfamily. In terms of tissue distribution, expressed by the venom gland.

It localises to the secreted. Its function is as follows. Putative ion channel inhibitor. The chain is Hainantoxin-XVIII-7 from Cyriopagopus hainanus (Chinese bird spider).